The primary structure comprises 86 residues: RNA-binding protein Hfq (86 aa).

Residues 9 to 68 (DPYLNTLRKEKVPVSIYLVNGIKLQGSIESFDQFVVLLKNTVSQMVYKHAISTVVPARPV) form the Sm domain. Residues 66–86 (RPVRLPSPSDSEHGDSEPGNA) are disordered. Over residues 75–86 (DSEHGDSEPGNA) the composition is skewed to basic and acidic residues.

This sequence belongs to the Hfq family. In terms of assembly, homohexamer.

In terms of biological role, RNA chaperone that binds small regulatory RNA (sRNAs) and mRNAs to facilitate mRNA translational regulation in response to envelope stress, environmental stress and changes in metabolite concentrations. Also binds with high specificity to tRNAs. The sequence is that of RNA-binding protein Hfq from Pseudomonas putida (strain W619).